Here is a 297-residue protein sequence, read N- to C-terminus: tRNA dimethylallyltransferase (297 aa).

9–16 contacts ATP; sequence GPTASGKS. Residue 11–16 coordinates substrate; it reads TASGKS. Interaction with substrate tRNA stretches follow at residues 34 to 37 and 155 to 159; these read DSMQ and QRVIR.

Belongs to the IPP transferase family. Monomer. Mg(2+) is required as a cofactor.

It catalyses the reaction adenosine(37) in tRNA + dimethylallyl diphosphate = N(6)-dimethylallyladenosine(37) in tRNA + diphosphate. In terms of biological role, catalyzes the transfer of a dimethylallyl group onto the adenine at position 37 in tRNAs that read codons beginning with uridine, leading to the formation of N6-(dimethylallyl)adenosine (i(6)A). The sequence is that of tRNA dimethylallyltransferase from Leuconostoc mesenteroides subsp. mesenteroides (strain ATCC 8293 / DSM 20343 / BCRC 11652 / CCM 1803 / JCM 6124 / NCDO 523 / NBRC 100496 / NCIMB 8023 / NCTC 12954 / NRRL B-1118 / 37Y).